An 846-amino-acid polypeptide reads, in one-letter code: Rho GTPase-activating protein 17 (846 aa).

In terms of domain architecture, BAR spans 14 to 246; the sequence is QTVGRAEKTE…MRAHQDKWAE (233 aa). Residues 252-442 form the Rho-GAP domain; it reads TPLEEHLKRS…PIIQHADWFF (191 aa). A compositionally biased stretch (polar residues) spans 459 to 475; it reads TPNSNHSSHTGNDSDSG. The tract at residues 459 to 482 is disordered; sequence TPNSNHSSHTGNDSDSGTLERKRP. Ser484 and Ser575 each carry phosphoserine. The segment at 519–807 is disordered; that stretch reads IAPAFQPPLP…ASRIVTDTNS (289 aa). Positions 592-619 are enriched in polar residues; that stretch reads RNSNQMTTVPNQAQTGGNSHQLSVSTPH. Residues 637 to 650 show a composition bias toward pro residues; it reads APAPPKPGNLPPGH. The span at 653-690 shows a compositional bias: low complexity; that stretch reads GQSSPGTGTSPKPSARSPSPPQQQQQQQQQQQQQQQQQ. Phosphoserine is present on residues Ser698 and Ser700. 2 stretches are compositionally biased toward pro residues: residues 704–717 and 726–741; these read IQAP…PPTQ and EPGP…PSTP. Residues Thr730, Thr734, and Thr736 each carry the phosphothreonine modification. Positions 730–743 match the SH3-binding motif; the sequence is TPPQTPTPPSTPPL. A Phosphoserine modification is found at Ser739. Thr740 is subject to Phosphothreonine. Polar residues predominate over residues 746 to 757; that stretch reads QNPSQSETTQLH. Residues 772–782 show a composition bias toward pro residues; it reads RPSVPPPPHPP. Residues 791–807 show a composition bias toward polar residues; sequence LTSSVPTASRIVTDTNS.

Component of a complex whose core is composed of ARHGAP17, AMOT, PALS1, PATJ and PARD3/PAR3. Interacts with NHERF1, FNBP1, TRIP10, CAPZA (CAPZA1, CAPZA2 or CAPZA3), CAPZB, CD2AP and SH3KBP1/CIN85.

It is found in the membrane. The protein localises to the cytoplasm. It localises to the cell junction. Its subcellular location is the tight junction. Rho GTPase-activating protein involved in the maintenance of tight junction by regulating the activity of CDC42, thereby playing a central role in apical polarity of epithelial cells. Specifically acts as a GTPase activator for the CDC42 GTPase by converting it to an inactive GDP-bound state. The complex formed with AMOT acts by regulating the uptake of polarity proteins at tight junctions, possibly by deciding whether tight junction transmembrane proteins are recycled back to the plasma membrane or sent elsewhere. Participates in the Ca(2+)-dependent regulation of exocytosis, possibly by catalyzing GTPase activity of Rho family proteins and by inducing the reorganization of the cortical actin filaments. Acts as a GTPase activator in vitro for RAC1. In Mus musculus (Mouse), this protein is Rho GTPase-activating protein 17 (Arhgap17).